Here is a 146-residue protein sequence, read N- to C-terminus: Large ribosomal subunit protein uL24 (146 aa).

Residues 1–33 (MKYNPRVTSSRRRNRKPHFTASSSERRVXMSSP) are disordered. Residues 9 to 18 (SSRRRNRKPH) are compositionally biased toward basic residues.

This sequence belongs to the universal ribosomal protein uL24 family.

The protein is Large ribosomal subunit protein uL24 (RPL26) of Brassica campestris (Field mustard).